The following is a 1357-amino-acid chain: Mediator of RNA polymerase II transcription subunit 13 (1357 aa).

2 disordered regions span residues 356–391 (SCNYGPASRTKLTPSKAQDLRRSAAPLSADSFGNGF) and 420–487 (DLWN…HRKE). Over residues 435-451 (INPTSQQGDSARITSGS) the composition is skewed to polar residues.

This sequence belongs to the Mediator complex subunit 13 family. Component of the SRB8-11 complex, which itself associates with the Mediator complex.

Its subcellular location is the nucleus. Its function is as follows. Component of the SRB8-11 complex. The SRB8-11 complex is a regulatory module of the Mediator complex which is itself involved in regulation of basal and activated RNA polymerase II-dependent transcription. The SRB8-11 complex may be involved in the transcriptional repression of a subset of genes regulated by Mediator. It may inhibit the association of the Mediator complex with RNA polymerase II to form the holoenzyme complex. This is Mediator of RNA polymerase II transcription subunit 13 (SSN2) from Eremothecium gossypii (strain ATCC 10895 / CBS 109.51 / FGSC 9923 / NRRL Y-1056) (Yeast).